The following is a 130-amino-acid chain: 3-aminoacrylate deaminase RutC (130 aa).

Belongs to the RutC family.

It carries out the reaction (Z)-3-aminoacrylate + H2O + H(+) = 3-oxopropanoate + NH4(+). Its function is as follows. Involved in pyrimidine catabolism. Catalyzes the deamination of 3-aminoacrylate to malonic semialdehyde, a reaction that can also occur spontaneously. RutC may facilitate the reaction and modulate the metabolic fitness, rather than catalyzing essential functions. This chain is 3-aminoacrylate deaminase RutC, found in Variovorax paradoxus (strain S110).